Reading from the N-terminus, the 459-residue chain is Transcriptional coactivator YAP1-A (459 aa).

Positions 1–13 (MEPGSQQQPSAPA) are enriched in low complexity. A disordered region spans residues 1 to 22 (MEPGSQQQPSAPAQQPPPVGHQ). Phosphoserine; by LATS1 and LATS2 occurs at positions 30, 80, 98, and 134. 2 disordered regions span residues 65–99 (FKQP…AHSS) and 126–145 (SAPH…PLPP). WW domains follow at residues 141–174 (VPLP…DPRK) and 199–232 (GPLP…DPRL). Residues 246 to 268 (NAPVKAPPALPPPSPQTGVLGSG) are disordered. Positions 250 to 260 (KAPPALPPPSP) are enriched in pro residues. The tract at residues 261 to 459 (QTGVLGSGGN…LDKESFLTWL (199 aa)) is transactivation domain. Residues 269–297 (GNQQMRLQQLQMEKERLRLKHQELLRQVR) adopt a coiled-coil conformation. The segment at 344-363 (GTYHSRDESTESGLSMSSYS) is disordered. Polar residues predominate over residues 354–363 (ESGLSMSSYS).

This sequence belongs to the YAP1 family. As to quaternary structure, interacts with tead1. In terms of processing, phosphorylated by lats1 and lats2; leading to cytoplasmic translocation and inactivation.

It localises to the cytoplasm. Its subcellular location is the nucleus. It is found in the cell junction. The protein resides in the tight junction. The protein localises to the cell membrane. In terms of biological role, transcriptional regulator which can act both as a coactivator and a corepressor and is the critical downstream regulatory target in the Hippo signaling pathway that plays a pivotal role in organ size control and tumor suppression by restricting proliferation and promoting apoptosis. Plays a key role in tissue tension and 3D tissue shape by regulating cortical actomyosin network formation. Required for expansion of the neural plate and neural plate border zone progenitor pools. Acts as a direct regulator of pax3 expression via interaction with tead1. The protein is Transcriptional coactivator YAP1-A of Xenopus laevis (African clawed frog).